A 102-amino-acid chain; its full sequence is Small ubiquitin-related modifier 1-A (102 aa).

Residues 1–20 (MSDQEAKPSSEDLGDKKDGG) form a disordered region. Residues 21-98 (DYIKLKVIGQ…IEVYQEQTGG (78 aa)) form the Ubiquitin-like domain. A Glycyl lysine isopeptide (Gly-Lys) (interchain with K-? in acceptor proteins) cross-link involves residue Gly-98. Positions 99-102 (HSTF) are excised as a propeptide.

It belongs to the ubiquitin family. SUMO subfamily. As to quaternary structure, interacts with sae2, ube2i, ranbp2, pias1 and pias2. Covalently attached to a number of proteins including rangap1 and ranbp2. Interacts with sox9 and sox10. Cleavage of precursor form by a sentrin-specific protease is necessary for function.

The protein resides in the nucleus membrane. The protein localises to the nucleus speckle. It is found in the cytoplasm. Its subcellular location is the nucleus. It localises to the PML body. The protein resides in the cell membrane. In terms of biological role, ubiquitin-like protein that can be covalently attached to proteins as a monomer or a lysine-linked polymer. Covalent attachment via an isopeptide bond to its substrates requires prior activation by the E1 complex sae1-sae2 and linkage to the E2 enzyme ube2i. This post-translational modification on lysine residues of proteins plays a crucial role in a number of cellular processes such as nuclear transport, DNA replication and repair, mitosis and signal transduction. Polymeric sumo1 chains are also susceptible to polyubiquitination which functions as a signal for proteasomal degradation of modified proteins. This chain is Small ubiquitin-related modifier 1-A (sumo1-a), found in Xenopus laevis (African clawed frog).